The chain runs to 1516 residues: Myosin-14 (1516 aa).

One can recognise a Myosin N-terminal SH3-like domain in the interval 7–56 (NVGSCVWVEDPEVAWIDGEVIEVKGSDIKVKCTSGKTVAIKVSSAYPKDV). The Myosin motor domain maps to 61 to 738 (SGVDDMTRLA…QMADLDARRN (678 aa)). ATP contacts are provided by residues 155-162 (GESGAGKT) and 208-216 (NNNSSRFGK). Actin-binding regions lie at residues 494–528 (LIEK…YQTF), 530–553 (DHKH…AGDV), 588–612 (FPLL…KQQL), and 612–634 (LVTL…KPNN). 6 IQ domains span residues 741–770 (LGRA…VATN), 764–793 (LRKV…DAAV), 789–818 (RDAA…AAVS), 812–841 (LYFA…DKAA), 837–866 (QDKA…AAIT), and 860–889 (LKKA…AAKE). A coiled-coil region spans residues 890–1056 (TGVLEAAKSK…ENKILRQKSL (167 aa)). The interval 1061–1085 (GHLPPTPVKGSQNGHFSSKESPFNG) is disordered. A compositionally biased stretch (polar residues) spans 1069 to 1084 (KGSQNGHFSSKESPFN). Positions 1158–1463 (DRLVQMIGSA…IANMRVLMTE (306 aa)) constitute a Dilute domain.

The protein belongs to the TRAFAC class myosin-kinesin ATPase superfamily. Myosin family. Plant myosin class XI subfamily. In terms of assembly, homodimer.

Functionally, myosin heavy chain that is required for the cell cycle-regulated transport of various organelles and proteins for their segregation. Functions by binding with its tail domain to receptor proteins on organelles and exerting force with its N-terminal motor domain against actin filaments, thereby transporting its cargo along polarized actin cables. The polypeptide is Myosin-14 (XI-H) (Arabidopsis thaliana (Mouse-ear cress)).